A 397-amino-acid polypeptide reads, in one-letter code: Stearoyl-[acyl-carrier-protein] 9-desaturase, chloroplastic (397 aa).

A chloroplast-targeting transit peptide spans 1-33; sequence MALNFNAIASKSQKLPCFALPPKATLRSPKFSM. E138, E176, H179, E229, E262, and H265 together coordinate Fe cation.

It belongs to the fatty acid desaturase type 2 family. In terms of assembly, homodimer. It depends on Fe(2+) as a cofactor.

It localises to the plastid. The protein localises to the chloroplast. The enzyme catalyses octadecanoyl-[ACP] + 2 reduced [2Fe-2S]-[ferredoxin] + O2 + 2 H(+) = (9Z)-octadecenoyl-[ACP] + 2 oxidized [2Fe-2S]-[ferredoxin] + 2 H2O. The protein operates within lipid metabolism; fatty acid metabolism. In terms of biological role, converts stearoyl-ACP to oleoyl-ACP by introduction of a cis double bond between carbons 9 and 10 of the acyl chain. This is Stearoyl-[acyl-carrier-protein] 9-desaturase, chloroplastic from Gossypium hirsutum (Upland cotton).